The chain runs to 83 residues: CDC42 small effector protein 2 (83 aa).

2 S-palmitoyl cysteine lipidation sites follow: Cys-10 and Cys-11. Residues 28 to 41 (IGEPTNFVHTAHVG) enclose the CRIB domain. Phosphoserine is present on residues Ser-42 and Ser-51.

The protein belongs to the CDC42SE/SPEC family. As to quaternary structure, interacts with CDC42 (in GTP-bound form). Interacts weakly with RAC1 and not at all with RHOA.

Its subcellular location is the cytoplasm. The protein resides in the cytoskeleton. It is found in the cell membrane. The protein localises to the cell projection. It localises to the phagocytic cup. Functionally, probably involved in the organization of the actin cytoskeleton by acting downstream of CDC42, inducing actin filament assembly. Alters CDC42-induced cell shape changes. In activated T-cells, may play a role in CDC42-mediated F-actin accumulation at the immunological synapse. May play a role in early contractile events in phagocytosis in macrophages. The polypeptide is CDC42 small effector protein 2 (Cdc42se2) (Rattus norvegicus (Rat)).